The chain runs to 121 residues: Large ribosomal subunit protein bL20 (121 aa).

Belongs to the bacterial ribosomal protein bL20 family.

In terms of biological role, binds directly to 23S ribosomal RNA and is necessary for the in vitro assembly process of the 50S ribosomal subunit. It is not involved in the protein synthesizing functions of that subunit. This is Large ribosomal subunit protein bL20 from Polynucleobacter necessarius subsp. necessarius (strain STIR1).